We begin with the raw amino-acid sequence, 211 residues long: Large ribosomal subunit protein eL13 (211 aa).

K16 carries the N6-acetyllysine modification. Phosphoserine occurs at positions 52, 77, and 106. Residues K123 and K145 each participate in a glycyl lysine isopeptide (Lys-Gly) (interchain with G-Cter in SUMO2) cross-link. K174 participates in a covalent cross-link: Glycyl lysine isopeptide (Lys-Gly) (interchain with G-Cter in SUMO1); alternate. Residues K174 and K177 each participate in a glycyl lysine isopeptide (Lys-Gly) (interchain with G-Cter in SUMO2); alternate cross-link. K177 is modified (N6-acetyllysine; alternate).

This sequence belongs to the eukaryotic ribosomal protein eL13 family. Component of the 60S large ribosomal subunit (LSU).

The protein localises to the cytoplasm. Functionally, component of the ribosome, a large ribonucleoprotein complex responsible for the synthesis of proteins in the cell. The small ribosomal subunit (SSU) binds messenger RNAs (mRNAs) and translates the encoded message by selecting cognate aminoacyl-transfer RNA (tRNA) molecules. The large subunit (LSU) contains the ribosomal catalytic site termed the peptidyl transferase center (PTC), which catalyzes the formation of peptide bonds, thereby polymerizing the amino acids delivered by tRNAs into a polypeptide chain. The nascent polypeptides leave the ribosome through a tunnel in the LSU and interact with protein factors that function in enzymatic processing, targeting, and the membrane insertion of nascent chains at the exit of the ribosomal tunnel. As part of the LSU, it is probably required for its formation and the maturation of rRNAs. Plays a role in bone development. This Cricetulus griseus (Chinese hamster) protein is Large ribosomal subunit protein eL13 (RPL13).